Reading from the N-terminus, the 1576-residue chain is MDFAKCIGDEFFGPVVDGCRGGFDFTLKFELLFFATIPPAIFLILAVPRIASLYSEPTIVAWRSWLYASKQILGFVNLVLQVTLLVMTTQGTAQFKLSGLFLSARIVTTSSTLLSVIVCHYEHSRCRRPSTILDVYLGLTLFLDIAHNRTLWLSVSSSLDAIFVRFHTTTVACKAVLAILESLSKKRLFVLHNRTTQSLDGTRGSYSLSTFSWLSRLLLSGYQNPLRLDSLPLLDEAMAVETLYARFLENTKGYLGESSGSDQKSRLPLSQALAKTLLLPLLLPILPRLVLIGLSISQAFLIQAVTGFLSAKNKADEVGYGLIGATILIYVGIALSTSLYWYYHQRFLYMARSCLTSGIFRKTTELSEATLAESQAITLMSTDIERVLAGFLNLHELWASLIQAVIVSWILWTRLKGFFALPVGLTVACFVALATVGRYIGGFQKTWMQETQKRVAMIASVLASMKQVKVSGLAATIDKKVQQARKTELRASHGVRMLQITAMTLSLLPELIAPVITLAATSESVATSNIFTIVALISLLTAPLGQLFQSVAPLMSGLACLDRIQTYLELEPVRERRGHNKSRLERIVDGPASSDEDYSYAFRVVNGSFRWQKDSPHCLQNVNLTVKHAAFTMIVGPVGSGKSTLCKALLGEISLSAGRVLVGKESEGKIAYCGQTPFLSNSTIRDNIVHFSQWNTSRYIEVIEASGLSYHLARLPDGHDTLVGSNGLLLSGGQRQLIAIARALYSDAHTLIFDDVLSGLDARTEDHVFRHIFGPSGLLRKRHDRPAVILCTQSVMYLPLADHIIVLSEQGDIAEQGKWEVLNSNGGYLQSLCVRDADATTPKVELGVEGESERNHWHTTESDEMRTKETLEQQLVVSENDEATVSGPASSGPSHVVAWSGGLANYRYYLKAVSVVALVAFLASAICYGFFFAFPTLWLNFWVRDATSKHRSHTNAFWVGIYGLFHALSLLGGFLTMYLAVTSISLVSGASLHSSIFAAIMRAPLSLFRTIDQGTLTNYFSQDITLVDGELPRSLIQFVCDLAISLSMAGVLAASSPYLAAMYPIAIALMYATVKLYLRTSRQLRILALEAKSPLYMHFLDVGRGIATLRAARLLKQYENQNDQLLEISQRPAYLLAMVQYWLLFILNIIVMFLAIFVVTLVTQLRNHGTGFAGSGLVMLLQFGQILASAMQSYAKLETSMGAVHRLKSLFEHVVSDTVGEKGISPPLSWPSKGYIKLDGVSASYMSTNEETDNTLGGLALRNIRLVVEPGQHVAICGRSGSGKSSLVLLLLGLLEPLQSTGCDAITIDGLDIRTIKQAVLSERIIAVSQDTIFLPAGASWQENLDLLGTCTTSEVKSVLENMNLWSLIESQDGGLTAAMKPEELSSGQKQLFSVARAVLRKRVKDREIRQASSIEIPSTSQLRLASDAQECKKTESDCEAVEGDSDLYCLPQLEPSNDTRLAAGREDVLGGVLLLDEFNSSMDLLTEQRYFNRIQSEFPGYTIIAITHSLASFIKDQECRQEGEAQVYRGGFFDRIIVLDSGMIVEDGHPTTLLETSHSKFRALCEAAARGEVST.

10 helical membrane-spanning segments follow: residues 27-47 (LKFELLFFATIPPAIFLILAV), 72-92 (ILGFVNLVLQVTLLVMTTQGT), 99-119 (GLFLSARIVTTSSTLLSVIVC), 267-287 (LPLSQALAKTLLLPLLLPILP), 289-309 (LVLIGLSISQAFLIQAVTGFL), 321-341 (GLIGATILIYVGIALSTSLYW), 387-407 (VLAGFLNLHELWASLIQAVIV), 417-437 (GFFALPVGLTVACFVALATVG), 500-520 (ITAMTLSLLPELIAPVITLAA), and 525-545 (VATSNIFTIVALISLLTAPLG). In terms of domain architecture, ABC transmembrane type-1 1 spans 289-556 (LVLIGLSISQ…LFQSVAPLMS (268 aa)). Residues 602–834 (FRVVNGSFRW…NGGYLQSLCV (233 aa)) form the ABC transporter 1 domain. 636 to 643 (GPVGSGKS) is a binding site for ATP. Helical transmembrane passes span 915 to 935 (VVALVAFLASAICYGFFFAFP), 957 to 977 (FWVGIYGLFHALSLLGGFLTM), 981 to 1001 (VTSISLVSGASLHSSIFAAIM), 1035 to 1054 (LIQFVCDLAISLSMAGVLAA), 1060 to 1078 (AAMYPIAIALMYATVKLYL), 1142 to 1162 (WLLFILNIIVMFLAIFVVTLV), and 1171 to 1191 (GFAGSGLVMLLQFGQILASAM). Positions 919-1199 (VAFLASAICY…AMQSYAKLET (281 aa)) constitute an ABC transmembrane type-1 2 domain. Residues 1236–1567 (IKLDGVSASY…SHSKFRALCE (332 aa)) form the ABC transporter 2 domain. 1278 to 1285 (GRSGSGKS) lines the ATP pocket.

This sequence belongs to the ABC transporter superfamily. ABCC family. Conjugate transporter (TC 3.A.1.208) subfamily.

The protein resides in the cell membrane. Functionally, ABC transporter that may provide the dual role AAL-toxin export and self-protection by allowing the fungus to evade the harmful effect of its own AAL-toxin production. This chain is ABC transporter ALT5, found in Alternaria alternata (Alternaria rot fungus).